Consider the following 570-residue polypeptide: CRISPR-associated protein Cas8a1/Csx13 (570 aa).

Disordered regions lie at residues 1 to 23 (MACM…AGLR) and 551 to 570 (GGEA…SEQS).

Belongs to the CRISPR-associated protein Cas8a1/Csx13 family. Myxan subtype subfamily.

In terms of biological role, CRISPR (clustered regularly interspaced short palindromic repeat) is an adaptive immune system that provides protection against mobile genetic elements (viruses, transposable elements and conjugative plasmids). CRISPR clusters contain spacers, sequences complementary to antecedent mobile elements, and target invading nucleic acids. CRISPR clusters are transcribed and processed into CRISPR RNA (crRNA). Functionally, functions in an unknown fashion to stimulate transcription of fruA independently of the intracellular A- and E-developmental signals. The sequence is that of CRISPR-associated protein Cas8a1/Csx13 (devT) from Myxococcus xanthus (strain DK1622).